The sequence spans 114 residues: UPF0757 protein YmgG (114 aa).

This sequence belongs to the UPF0757 family.

This Shigella flexneri protein is UPF0757 protein YmgG.